A 207-amino-acid polypeptide reads, in one-letter code: Nuclear transcription factor Y subunit beta (207 aa).

The a domain stretch occupies residues 1–52 (MTMDGDSSTTDASQLGISADYIGGSHYVIQPHDDTEDSMNDHEDTNGSKESF). The disordered stretch occupies residues 27–52 (YVIQPHDDTEDSMNDHEDTNGSKESF). A compositionally biased stretch (basic and acidic residues) spans 39 to 52 (MNDHEDTNGSKESF). The tract at residues 53–142 (REQDIYLPIA…PLKLYLQKFR (90 aa)) is b domain. The DNA-binding element occupies 59-65 (LPIANVA). A subunit association domain (SAD) region spans residues 86 to 97 (VQECVSEFISFI). Lys140 participates in a covalent cross-link: Glycyl lysine isopeptide (Lys-Gly) (interchain with G-Cter in ubiquitin). The tract at residues 143–207 (EAMKGEKGIG…ISGVQQIQFS (65 aa)) is c domain.

This sequence belongs to the NFYB/HAP3 subunit family. Heterotrimeric transcription factor composed of three components, NF-YA, NF-YB and NF-YC. NF-YB and NF-YC must interact and dimerize for NF-YA association and DNA binding. Interacts with C1QBP. Post-translationally, monoubiquitination at Lys-140 plays an important role in transcriptional activation by allowing the deposition of histone H3 methylations as well as histone H2B monoubiquitination at 'Lys-121'.

It is found in the nucleus. In terms of biological role, component of the sequence-specific heterotrimeric transcription factor (NF-Y) which specifically recognizes a 5'-CCAAT-3' box motif found in the promoters of its target genes. NF-Y can function as both an activator and a repressor, depending on its interacting cofactors. The protein is Nuclear transcription factor Y subunit beta (NFYB) of Homo sapiens (Human).